A 436-amino-acid polypeptide reads, in one-letter code: Phosphomethylpyrimidine synthase (436 aa).

Residues Asn69, Met98, Tyr127, His163, 185–187 (SRG), 226–229 (DACR), and Glu265 each bind substrate. His269 contacts Zn(2+). Tyr292 lines the substrate pocket. His333 is a Zn(2+) binding site. Cys409, Cys412, and Cys416 together coordinate [4Fe-4S] cluster.

Belongs to the ThiC family. Requires [4Fe-4S] cluster as cofactor.

It carries out the reaction 5-amino-1-(5-phospho-beta-D-ribosyl)imidazole + S-adenosyl-L-methionine = 4-amino-2-methyl-5-(phosphooxymethyl)pyrimidine + CO + 5'-deoxyadenosine + formate + L-methionine + 3 H(+). The protein operates within cofactor biosynthesis; thiamine diphosphate biosynthesis. In terms of biological role, catalyzes the synthesis of the hydroxymethylpyrimidine phosphate (HMP-P) moiety of thiamine from aminoimidazole ribotide (AIR) in a radical S-adenosyl-L-methionine (SAM)-dependent reaction. This is Phosphomethylpyrimidine synthase from Clostridium acetobutylicum (strain ATCC 824 / DSM 792 / JCM 1419 / IAM 19013 / LMG 5710 / NBRC 13948 / NRRL B-527 / VKM B-1787 / 2291 / W).